The sequence spans 366 residues: Cellular tumor antigen p53 (366 aa).

Residues 1–41 form a transcription activation (acidic) region; that stretch reads MMDEQGLDGMQILPGSQDSFSELWASVQTPSIATIAEEFDD. Residues 80–267 mediate DNA binding; sequence DYPGEYGFQL…KTDEESSTKT (188 aa). C154, H157, C213, and C217 together coordinate Zn(2+). Residues 248–255 form an interaction with DNA region; that stretch reads RVCACPGR. Residues 255–264 are compositionally biased toward basic and acidic residues; it reads RDRKTDEESS. The interval 255–305 is disordered; the sequence is RDRKTDEESSTKTPNGPKQTKKRKQAPSNSAPHTTTVMKSKSSSSAEEEDK. A Bipartite nuclear localization signal motif is present at residues 275–295; the sequence is KKRKQAPSNSAPHTTTVMKSK. Residues 280 to 292 show a composition bias toward polar residues; the sequence is APSNSAPHTTTVM. Residues 305 to 336 are oligomerization; the sequence is KEVFTVLVKGRERYEIIKKINEAFEGAAEKEK. Residues 319-330 carry the Nuclear export signal motif; it reads EIIKKINEAFEG. Positions 332–366 are disordered; it reads AEKEKAKNKVAVKQELPVPSSGKRLVQRGERSDSD. The basic (repression of DNA-binding) stretch occupies residues 341–362; that stretch reads VAVKQELPVPSSGKRLVQRGER.

Belongs to the p53 family. In terms of assembly, binds DNA as a homotetramer. The cofactor is Zn(2+).

The protein localises to the cytoplasm. It is found in the nucleus. Its function is as follows. Multifunctional transcription factor that induces cell cycle arrest, DNA repair or apoptosis upon binding to its target DNA sequence. Acts as a tumor suppressor in many tumor types; induces growth arrest or apoptosis depending on the physiological circumstances and cell type. Negatively regulates cell division by controlling expression of a set of genes required for this process. One of the activated genes is an inhibitor of cyclin-dependent kinases. Apoptosis induction seems to be mediated either by stimulation of BAX and FAS antigen expression, or by repression of Bcl-2 expression. This chain is Cellular tumor antigen p53 (tp53), found in Platichthys flesus (European flounder).